Here is a 525-residue protein sequence, read N- to C-terminus: Neutrophil cytosol factor 2 (525 aa).

TPR repeat units follow at residues 37–70 (SRIC…DKHS), 71–104 (AVAY…LRGN), and 121–154 (CEVL…KSEP). Position 233 is a phosphothreonine (T233). The region spanning 240 to 299 (LEGEAHRVLFGFVPETPEELQVMPGNIVFVLKKGSDNWATVMFNGQKGLVPCNYLEPVEL) is the SH3 1 domain. The disordered stretch occupies residues 304-343 (QSQPQEDTSPESDIPPPPNSSPPGRLQLSPGHKQKEPKEL). Phosphoserine occurs at positions 324 and 398. The PB1 domain maps to 350–428 (PYMLKVHYKY…YCLTLWCEHT (79 aa)). Positions 437 to 457 (EPIQRENSDASKQTTEPQPKE) are disordered. In terms of domain architecture, SH3 2 spans 456 to 515 (KEGTQVVAIFSYEAAQPEDLEFVEGDVILVLSHVNEEWLEGECKGKVGIFPKAFVEGCAA).

It belongs to the NCF2/NOXA1 family. Component of the phagocyte NADPH oxidase complex composed of an obligatory core heterodimer formed by the membrane proteins CYBA and CYBB and the cytosolic regulatory subunits NCF1/p47-phox, NCF2/p67-phox, NCF4/p40-phox and the small GTPase RAC1 or RAC2. Part of a cytosolic complex composed at least by NCF1, NCF2 and NCF4. Interacts with NCF4. Interacts (via the C-terminal SH3 domain) with NCF1 (via C-terminus). Interacts with SYTL1 and RAC1. May interact with NOXO1. Interacts with S100A8 and calprotectin (S100A8/9). Interacts with GBP7 (via GB1/RHD3-type G domain). Interacts with CYBB; the interaction is enhanced in the presence of GBP7.

The protein resides in the cytoplasm. NCF2, NCF1, and a membrane bound cytochrome b558 are required for activation of the latent NADPH oxidase (necessary for superoxide production). Its function is as follows. Subunit of the phagocyte NADPH oxidase complex that mediates the transfer of electrons from cytosolic NADPH to O2 to produce the superoxide anion (O2(-)). In the activated complex, electrons are first transferred from NADPH to flavin adenine dinucleotide (FAD) and subsequently transferred via two heme molecules to molecular oxygen, producing superoxide through an outer-sphere reaction. Activation of the NADPH oxidase complex is initiated by the assembly of cytosolic subunits of the NADPH oxidase complex with the core NADPH oxidase complex to form a complex at the plasma membrane or phagosomal membrane. This activation process is initiated by phosphorylation dependent binding of the cytosolic NCF1/p47-phox subunit to the C-terminus of CYBA/p22-phox. This chain is Neutrophil cytosol factor 2, found in Mus musculus (Mouse).